The primary structure comprises 93 residues: Protein FMP16, mitochondrial (93 aa).

The transit peptide at 1–25 directs the protein to the mitochondrion; the sequence is MLRTTFLRTPRQLMRKSPRASFSIV. Positions 30-93 are disordered; the sequence is FPHLKNNQDE…EQNRPDDGVY (64 aa). Over residues 35–93 the composition is skewed to basic and acidic residues; it reads NNQDEAEKKEQGLFDSNKKRLDTLEHGKNPDYKQPGMEDLKKKGDDARIEQNRPDDGVY.

It is found in the mitochondrion. The chain is Protein FMP16, mitochondrial (FMP16) from Saccharomyces cerevisiae (strain ATCC 204508 / S288c) (Baker's yeast).